The following is an 892-amino-acid chain: DNA mismatch repair protein MutS (892 aa).

634–641 (GPNMGGKS) provides a ligand contact to ATP.

Belongs to the DNA mismatch repair MutS family.

In terms of biological role, this protein is involved in the repair of mismatches in DNA. It is possible that it carries out the mismatch recognition step. This protein has a weak ATPase activity. This Paraburkholderia phymatum (strain DSM 17167 / CIP 108236 / LMG 21445 / STM815) (Burkholderia phymatum) protein is DNA mismatch repair protein MutS.